The sequence spans 296 residues: Endochitinase 3 (296 aa).

The 285-residue stretch at 12-296 (HKLTVYWGAE…VKNGQLPEED (285 aa)) folds into the GH18 domain. Asn32 and Asn152 each carry an N-linked (GlcNAc...) asparagine glycan. Glu153 functions as the Proton donor in the catalytic mechanism. The N-linked (GlcNAc...) asparagine glycan is linked to Asn228.

It belongs to the glycosyl hydrolase 18 family. Chitinase class III subfamily.

It localises to the secreted. It carries out the reaction Random endo-hydrolysis of N-acetyl-beta-D-glucosaminide (1-&gt;4)-beta-linkages in chitin and chitodextrins.. Its function is as follows. Secreted chitinase involved in the degradation of chitin, a component of the cell walls of fungi and exoskeletal elements of some animals (including worms and arthropods). Participates in the infection process and directly acts in the penetration process of the host cuticle. Involved in heat-shock adaptation. This Metarhizium anisopliae (Entomophthora anisopliae) protein is Endochitinase 3 (chi3).